A 203-amino-acid chain; its full sequence is Probable chemoreceptor glutamine deamidase CheD (203 aa).

Belongs to the CheD family.

The enzyme catalyses L-glutaminyl-[protein] + H2O = L-glutamyl-[protein] + NH4(+). In terms of biological role, probably deamidates glutamine residues to glutamate on methyl-accepting chemotaxis receptors (MCPs), playing an important role in chemotaxis. This is Probable chemoreceptor glutamine deamidase CheD from Janthinobacterium sp. (strain Marseille) (Minibacterium massiliensis).